Here is a 256-residue protein sequence, read N- to C-terminus: 5-oxoprolinase subunit A (256 aa).

It belongs to the LamB/PxpA family. Forms a complex composed of PxpA, PxpB and PxpC.

The enzyme catalyses 5-oxo-L-proline + ATP + 2 H2O = L-glutamate + ADP + phosphate + H(+). In terms of biological role, catalyzes the cleavage of 5-oxoproline to form L-glutamate coupled to the hydrolysis of ATP to ADP and inorganic phosphate. This is 5-oxoprolinase subunit A from Cutibacterium acnes (strain DSM 16379 / KPA171202) (Propionibacterium acnes).